The primary structure comprises 516 residues: Nucleolar complex protein 4 homolog (516 aa).

Helical transmembrane passes span 296–316 (SACD…FILI), 347–367 (FFHL…LVAA), and 375–395 (LALT…CNLL).

Belongs to the CBF/MAK21 family.

It localises to the nucleus membrane. Its subcellular location is the nucleus. The protein localises to the nucleolus. This is Nucleolar complex protein 4 homolog (Noc4l) from Rattus norvegicus (Rat).